The primary structure comprises 227 residues: Gamma-glutamyl-hercynylcysteine sulfoxide hydrolase (227 aa).

C2 (nucleophile) is an active-site residue. The Glutamine amidotransferase type-2 domain occupies 2–227; the sequence is CRHVAWLGAP…RDAHVVVTPL (226 aa).

It carries out the reaction gamma-L-glutamyl-hercynylcysteine S-oxide + H2O = S-(hercyn-2-yl)-L-cysteine S-oxide + L-glutamate. It participates in amino-acid biosynthesis; ergothioneine biosynthesis. Catalyzes the hydrolysis of the gamma-glutamyl amide bond of hercynyl-gamma-L-glutamyl-L-cysteine sulfoxide to produce hercynylcysteine sulfoxide, a step in the biosynthesis pathway of ergothioneine. The sequence is that of Gamma-glutamyl-hercynylcysteine sulfoxide hydrolase from Mycolicibacterium smegmatis (strain ATCC 700084 / mc(2)155) (Mycobacterium smegmatis).